Reading from the N-terminus, the 341-residue chain is Limbic system-associated membrane protein (341 aa).

An N-terminal signal peptide occupies residues 1-28 (MVGRVQPDRKQLPLVLLRLLCLLPTGLP). Ig-like domains follow at residues 29-122 (VRSV…PKTS), 132-214 (PKIS…VKVT), and 219-304 (PTIT…ASLV). Residues Asn40 and Asn66 are each glycosylated (N-linked (GlcNAc...) asparagine). A disulfide bond links Cys53 and Cys111. A Phosphotyrosine modification is found at Tyr94. 2 N-linked (GlcNAc...) asparagine glycosylation sites follow: Asn136 and Asn148. 2 cysteine pairs are disulfide-bonded: Cys153–Cys197 and Cys239–Cys290. Asn279, Asn287, and Asn300 each carry an N-linked (GlcNAc...) asparagine glycan.

Belongs to the immunoglobulin superfamily. IgLON family.

The protein localises to the cell membrane. Mediates selective neuronal growth and axon targeting. Contributes to the guidance of developing axons and remodeling of mature circuits in the limbic system. Essential for normal growth of the hippocampal mossy fiber projection. This chain is Limbic system-associated membrane protein (Lsamp), found in Mus musculus (Mouse).